The primary structure comprises 620 residues: 1-deoxy-D-xylulose-5-phosphate synthase (620 aa).

Thiamine diphosphate contacts are provided by residues H80 and 121-123; that span reads GHS. D152 contributes to the Mg(2+) binding site. Thiamine diphosphate-binding positions include 153–154, N181, Y288, and E370; that span reads GA. N181 is a Mg(2+) binding site.

The protein belongs to the transketolase family. DXPS subfamily. Homodimer. Mg(2+) is required as a cofactor. Requires thiamine diphosphate as cofactor.

The enzyme catalyses D-glyceraldehyde 3-phosphate + pyruvate + H(+) = 1-deoxy-D-xylulose 5-phosphate + CO2. Its pathway is metabolic intermediate biosynthesis; 1-deoxy-D-xylulose 5-phosphate biosynthesis; 1-deoxy-D-xylulose 5-phosphate from D-glyceraldehyde 3-phosphate and pyruvate: step 1/1. In terms of biological role, catalyzes the acyloin condensation reaction between C atoms 2 and 3 of pyruvate and glyceraldehyde 3-phosphate to yield 1-deoxy-D-xylulose-5-phosphate (DXP). The protein is 1-deoxy-D-xylulose-5-phosphate synthase of Klebsiella pneumoniae (strain 342).